The chain runs to 131 residues: D-ribose pyranase (131 aa).

The active-site Proton donor is the histidine 20. Substrate contacts are provided by residues aspartate 28, histidine 98, and 120–122; that span reads YAN.

It belongs to the RbsD / FucU family. RbsD subfamily. As to quaternary structure, homodecamer.

It localises to the cytoplasm. The enzyme catalyses beta-D-ribopyranose = beta-D-ribofuranose. It participates in carbohydrate metabolism; D-ribose degradation; D-ribose 5-phosphate from beta-D-ribopyranose: step 1/2. Functionally, catalyzes the interconversion of beta-pyran and beta-furan forms of D-ribose. The chain is D-ribose pyranase from Enterococcus faecalis (strain ATCC 700802 / V583).